A 394-amino-acid chain; its full sequence is Chaperone protein DnaJ (394 aa).

The J domain maps to 5-75; the sequence is DYYEVLGVDK…EKKQQYDQFG (71 aa). The segment at 150–231 adopts a CR-type zinc-finger fold; sequence GVEKTIKYKR…CRGTGTAKET (82 aa). The Zn(2+) site is built by cysteine 163, cysteine 166, cysteine 179, cysteine 182, cysteine 205, cysteine 208, cysteine 219, and cysteine 222. CXXCXGXG motif repeat units follow at residues 163-170, 179-186, 205-212, and 219-226; these read CEHCHGTG, CPTCNGQG, CPDCHGTG, and CKHCRGTG.

Belongs to the DnaJ family. In terms of assembly, homodimer. The cofactor is Zn(2+).

The protein localises to the cytoplasm. Participates actively in the response to hyperosmotic and heat shock by preventing the aggregation of stress-denatured proteins and by disaggregating proteins, also in an autonomous, DnaK-independent fashion. Unfolded proteins bind initially to DnaJ; upon interaction with the DnaJ-bound protein, DnaK hydrolyzes its bound ATP, resulting in the formation of a stable complex. GrpE releases ADP from DnaK; ATP binding to DnaK triggers the release of the substrate protein, thus completing the reaction cycle. Several rounds of ATP-dependent interactions between DnaJ, DnaK and GrpE are required for fully efficient folding. Also involved, together with DnaK and GrpE, in the DNA replication of plasmids through activation of initiation proteins. The protein is Chaperone protein DnaJ of Fusobacterium nucleatum subsp. polymorphum (Fusobacterium polymorphum).